The following is a 586-amino-acid chain: MTLFILTETSAGYALLKAKDKKLLKRDDLATEASTAEGVSNLLKLKSFQKFDSATAALEEVASVVEGKVTPRLASLLDEIKDEKKVSLAVADPKLGNAIGKLPGLDISLIADSTTADIYRAIREHLPTLIPGLLPQDMSTMSLGLSHSLARHKLKFSPDKIDTMIVQAIGLLDDLDKELNNYAMRVKEWYGWHFPELAKILNDNIAYSRLVLKMGMRSNFENADLAEILPEEIEAAVKAAADRSMGTEISEDDLENIQALAEQVVGFSEYRSQLAGYITARMNAIAPNLTALVGDLVGARLIAHAGSLTNLSKSPASTLQILGAEKALFRALKTKHDTPKYGLIYHASLIGQATGKNKGKMARVLAAKASLGLRVDALAEWDDDVTEEDKAALGTEARFNLERKLAALEGKPLKPRGVAIGPDGASAQPGKFNINEARKYNPDADAVDQDKATPSKKMLVQEVQDEEMADADSDEEPAANGVDSDSSDEETSKKSKKSKGSEIEKLAEKAGLSVKRYKRKLERGEIQFDAAGNPSAISKKDIKKAKKEAKKEAKKASKGDDKEKKRKRSDETEDTDGKKKKKKRDD.

The Nop domain occupies 285-410; it reads IAPNLTALVG…LERKLAALEG (126 aa). The span at 464–477 shows a compositional bias: acidic residues; that stretch reads QDEEMADADSDEEP. A disordered region spans residues 464–586; the sequence is QDEEMADADS…GKKKKKKRDD (123 aa). 2 stretches are compositionally biased toward basic and acidic residues: residues 499–508 and 549–563; these read KGSEIEKLAE and AKKEAKKASKGDDKE.

This sequence belongs to the NOP5/NOP56 family.

It localises to the nucleus. It is found in the nucleolus. Its function is as follows. Required for pre-18S rRNA processing. May bind microtubules. This Emericella nidulans (strain FGSC A4 / ATCC 38163 / CBS 112.46 / NRRL 194 / M139) (Aspergillus nidulans) protein is Nucleolar protein 58 (nop58).